Here is a 219-residue protein sequence, read N- to C-terminus: Cysteine dioxygenase (219 aa).

Histidine 106, histidine 108, and histidine 166 together coordinate Fe cation. The 3'-(S-cysteinyl)-tyrosine (Cys-Tyr) cross-link spans 113 to 183 (CVMKILHGSL…NDFAISLHLY (71 aa)).

This sequence belongs to the cysteine dioxygenase family. Fe cation serves as cofactor. In terms of processing, the thioether cross-link between Cys-113 and Tyr-183 plays a structural role through stabilizing the Fe(2+) ion, and prevents the production of highly damaging free hydroxyl radicals by holding the oxygen radical via hydroxyl hydrogen.

It catalyses the reaction L-cysteine + O2 = 3-sulfino-L-alanine + H(+). Cysteine dioxygenase involved in sulfite formation from cysteine. Required for keratin degradation and plays an important role in filamentous growth and virulence. The sequence is that of Cysteine dioxygenase from Arthroderma benhamiae (Trichophyton mentagrophytes).